We begin with the raw amino-acid sequence, 795 residues long: ATP-dependent RNA helicase DHX15 (795 aa).

Positions 1–108 (MSKRHRLDLG…HSTHAGHAGH (108 aa)) are disordered. A Phosphoserine modification is found at Ser-15. Over residues 20–62 (AGTDGKDRDRDRDREDRSKDRDRERDRGDREREREKEKEKELR) the composition is skewed to basic and acidic residues. Positions 79 to 108 (ASHSAHSTHSAHSTHSTHSAHSTHAGHAGH) are enriched in low complexity. Positions 147-313 (TDILVRHQSF…FDNCPLLTIP (167 aa)) constitute a Helicase ATP-binding domain. 160-167 (GETGSGKT) contributes to the ATP binding site. The DEAH box motif lies at 260-263 (DEAH). Residues 338-518 (TVIQIHMCEE…SVVLQLKKLG (181 aa)) form the Helicase C-terminal domain. An N6-acetyllysine modification is found at Lys-488. Residue Lys-786 forms a Glycyl lysine isopeptide (Lys-Gly) (interchain with G-Cter in SUMO2) linkage.

Belongs to the DEAD box helicase family. DEAH subfamily. DDX15/PRP43 sub-subfamily. As to quaternary structure, component of the U11/U12 snRNPs that are part of the U12-type spliceosome. Identified in the Intron Large spliceosome complex (IL, also named intron lariat spliceosome), a post-mRNA release spliceosomal complex containing the excised intron, U2, U5 and U6 snRNPs, and splicing factors; the association may be transient. The IL complex exists in two distinct conformations, one with the DHX15 (ILS2) and one without (ILS1). Interacts with TFIP11 (via G-patch domain); indicative for a recruitment to the IL complex. Interacts with SSB/La. Interacts with GPATCH2 (via G-patch domain); promoting the RNA helicase activity. Interacts with NKRF (via G-patch domain); promoting the RNA helicase activity. Interacts with NLRP6. Ubiquitous.

It is found in the nucleus. It localises to the nucleolus. It catalyses the reaction ATP + H2O = ADP + phosphate + H(+). ATPase activity is enhanced upon binding to G-patch domain-containing proteins. G-patch domain-containing proteins act like a brace that tethers mobile sections of DHX15 together, stabilizing a functional conformation with high RNA affinity, thereby promoting the ATPase activity. RNA helicase involved in mRNA processing and antiviral innate immunity. Pre-mRNA processing factor involved in disassembly of spliceosomes after the release of mature mRNA. In cooperation with TFIP11 seem to be involved in the transition of the U2, U5 and U6 snRNP-containing IL complex to the snRNP-free IS complex leading to efficient debranching and turnover of excised introns. Plays a key role in antiviral innate immunity by promoting both MAVS-dependent signaling and NLRP6 inflammasome. Acts as an RNA virus sensor: recognizes and binds viral double stranded RNA (dsRNA) and activates the MAVS-dependent signaling to produce interferon-beta and interferon lambda-3 (IFNL3). Involved in intestinal antiviral innate immunity together with NLRP6: recognizes and binds viral dsRNA and promotes activation of the NLRP6 inflammasome in intestinal epithelial cells to restrict infection by enteric viruses. The NLRP6 inflammasome acts by promoting maturation and secretion of IL18 in the extracellular milieu. Also involved in antibacterial innate immunity by promoting Wnt-induced antimicrobial protein expression in Paneth cells. This is ATP-dependent RNA helicase DHX15 from Homo sapiens (Human).